The following is a 78-amino-acid chain: MTEAEIKDKVYDIIVSKMGVNKDQIKPESKFSDDLGADSLDTVELIMELENEFDVQIPDEDAEKIGTVQQAIDYIVKK.

The Carrier domain maps to 4–78; it reads AEIKDKVYDI…QQAIDYIVKK (75 aa). Ser-39 bears the O-(pantetheine 4'-phosphoryl)serine mark.

The protein belongs to the acyl carrier protein (ACP) family. In terms of processing, 4'-phosphopantetheine is transferred from CoA to a specific serine of apo-ACP by AcpS. This modification is essential for activity because fatty acids are bound in thioester linkage to the sulfhydryl of the prosthetic group.

Its subcellular location is the cytoplasm. It participates in lipid metabolism; fatty acid biosynthesis. In terms of biological role, carrier of the growing fatty acid chain in fatty acid biosynthesis. This Chlorobium phaeovibrioides (strain DSM 265 / 1930) (Prosthecochloris vibrioformis (strain DSM 265)) protein is Acyl carrier protein.